The chain runs to 722 residues: Neprilysin-1 (722 aa).

The N-terminal stretch at 1–17 is a signal peptide; the sequence is MAVALLVALCVVSSRMA. Residues 32-722 enclose the Peptidase M13 domain; sequence VCNSPVCQKA…MNPTHKCLLW (691 aa). 5 cysteine pairs are disulfide-bonded: Cys33–Cys38, Cys56–Cys707, Cys64–Cys667, Cys120–Cys378, and Cys589–Cys719. Residues Asn100, Asn184, Asn207, and Asn424 are each glycosylated (N-linked (GlcNAc...) asparagine). His552 provides a ligand contact to Zn(2+). Glu553 is an active-site residue. A Zn(2+)-binding site is contributed by His556. Asn609 carries an N-linked (GlcNAc...) asparagine glycan. Residue Glu614 coordinates Zn(2+). Residue Asp618 is the Proton donor of the active site.

It belongs to the peptidase M13 family. The cofactor is Zn(2+). Post-translationally, contains 5 disulfide bonds. In terms of tissue distribution, expressed by the venom gland.

It is found in the secreted. This Trittame loki (Brush-footed trapdoor spider) protein is Neprilysin-1.